The sequence spans 423 residues: F-box protein At1g52495 (423 aa).

The F-box domain occupies 49 to 95; it reads KLKDVHLPLDLIVEILKKLPTKSLMRFRCVSKPWSFIISKRRDFVES.

In Arabidopsis thaliana (Mouse-ear cress), this protein is F-box protein At1g52495.